The primary structure comprises 726 residues: Dipeptidyl-peptidase 5 (726 aa).

A signal peptide spans 1–19; it reads MAAAKWLIASLAFASSGLA. 2 N-linked (GlcNAc...) asparagine glycosylation sites follow: Asn96 and Asn252. A disordered region spans residues 269-291; the sequence is AEPINKRNGPRTPQGIEGASSSP. Residue Ser558 is the Charge relay system of the active site. A glycan (N-linked (GlcNAc...) asparagine) is linked at Asn605. Active-site charge relay system residues include Asp641 and His673. Residue Asn699 is glycosylated (N-linked (GlcNAc...) asparagine).

Belongs to the peptidase S9C family.

It localises to the secreted. In terms of biological role, extracellular dipeptidyl-peptidase which removes N-terminal dipeptides sequentially from polypeptides having unsubstituted N-termini. Contributes to pathogenicity. The chain is Dipeptidyl-peptidase 5 (DPP5) from Trichophyton tonsurans (Scalp ringworm fungus).